The primary structure comprises 103 residues: MKNQKIRIRLKAFDYKLIDQSAAEIVDTAKRTGAVVRGPVPLPTRIRRYDVLRSPHVNKTSRDQFEIHTHQRLMDIVDPTDKTVDALMRLDLPAGVDVEIALQ.

The protein belongs to the universal ribosomal protein uS10 family. As to quaternary structure, part of the 30S ribosomal subunit.

Involved in the binding of tRNA to the ribosomes. In Bordetella parapertussis (strain 12822 / ATCC BAA-587 / NCTC 13253), this protein is Small ribosomal subunit protein uS10.